We begin with the raw amino-acid sequence, 82 residues long: Diphthamide biosynthesis protein 3 (82 aa).

In terms of domain architecture, DPH-type MB spans 3 to 59 (TYDEIEIEDMTFEPENQMFTYPCPCGDRFQIYLDDMFEGEKVAVCPSCSLMIDVVFD). C25, C27, C47, and C50 together coordinate Fe cation. Positions 66–82 (YYEEAGIHPPEPIAAAA) are required for interaction with the elongator complex.

Belongs to the DPH3 family. In terms of assembly, component of the 2-(3-amino-3-carboxypropyl)histidine synthase complex composed of DPH1, DPH2, KTI11/DPH3 and a NADH-dependent reductase, predominantly CBR1. Interacts with DPH1. Interacts with DPH2. Interacts with CBR1. Interacts with elongation factor 2. Interacts with ATS1/KTI13; the interaction is direct. Interacts with the 40S ribosomal protein RPS7A. Interacts with the 40S ribosomal protein RPS19A. Interacts with the elongator complex subunit IKI3/ELP1. Interacts with the elongator complex subunit ELP2. Interacts with the elongator complex subunit ELP3. Interacts with the elongator complex subunit ELP5.

It is found in the cytoplasm. The protein localises to the nucleus. It carries out the reaction [3Fe-4S](1+)-[protein] + Fe(2+)-[Dph3] = [3Fe-4S](0)-[protein] + Fe(3+)-[Dph3]. The catalysed reaction is 2 [3Fe-4S](0)-[protein] + 2 Fe(2+)-[Dph3] + NADH = 2 [4Fe-4S](1+)-[protein] + 2 [Dph3] + NAD(+) + H(+). The protein operates within protein modification; peptidyl-diphthamide biosynthesis. Required for the first step of diphthamide biosynthesis, a post-translational modification of histidine which occurs in elongation factor 2. DPH1 and DPH2 transfer a 3-amino-3-carboxypropyl (ACP) group from S-adenosyl-L-methionine (SAM) to a histidine residue, the reaction is assisted by a reduction system comprising KTI11/DPH3 and a NADH-dependent reductase, predominantly CBR1. Acts as an electron donor to reduce the Fe-S cluster in DPH1-DPH2 keeping the [4Fe-4S] clusters in the active and reduced state. Restores iron to DPH1-DPH2 iron-sulfur clusters which have degraded from [4Fe-4S] to [3Fe-4S] by donating an iron atom to reform [4Fe-4S] clusters, in a manner dependent on the presence of elongation factor 2 and SAM. Together with ATS1; associates with the elongator complex and is required for tRNA Wobble base modifications mediated by the elongator complex. The elongator complex is required for multiple tRNA modifications, including mcm5U (5-methoxycarbonylmethyl uridine), mcm5s 2U (5-methoxycarbonylmethyl-2-thiouridine), and ncm5U (5-carbamoylmethyl uridine). In Saccharomyces cerevisiae (strain ATCC 204508 / S288c) (Baker's yeast), this protein is Diphthamide biosynthesis protein 3.